A 132-amino-acid chain; its full sequence is Urease subunit beta (132 aa).

Belongs to the urease beta subunit family. Heterotrimer of UreA (gamma), UreB (beta) and UreC (alpha) subunits. Three heterotrimers associate to form the active enzyme.

It localises to the cytoplasm. The enzyme catalyses urea + 2 H2O + H(+) = hydrogencarbonate + 2 NH4(+). The protein operates within nitrogen metabolism; urea degradation; CO(2) and NH(3) from urea (urease route): step 1/1. This is Urease subunit beta from Natronomonas pharaonis (strain ATCC 35678 / DSM 2160 / CIP 103997 / JCM 8858 / NBRC 14720 / NCIMB 2260 / Gabara) (Halobacterium pharaonis).